Here is a 335-residue protein sequence, read N- to C-terminus: Holliday junction branch migration complex subunit RuvB (335 aa).

Positions methionine 1–tyrosine 181 are large ATPase domain (RuvB-L). ATP contacts are provided by residues leucine 20, arginine 21, glycine 62, lysine 65, threonine 66, threonine 67, glutamate 128 to tyrosine 130, arginine 171, tyrosine 181, and arginine 218. Residue threonine 66 participates in Mg(2+) binding. Residues lysine 182 to glycine 252 form a small ATPAse domain (RuvB-S) region. The head domain (RuvB-H) stretch occupies residues glutamate 255–glutamate 335. DNA contacts are provided by arginine 309 and arginine 314.

This sequence belongs to the RuvB family. In terms of assembly, homohexamer. Forms an RuvA(8)-RuvB(12)-Holliday junction (HJ) complex. HJ DNA is sandwiched between 2 RuvA tetramers; dsDNA enters through RuvA and exits via RuvB. An RuvB hexamer assembles on each DNA strand where it exits the tetramer. Each RuvB hexamer is contacted by two RuvA subunits (via domain III) on 2 adjacent RuvB subunits; this complex drives branch migration. In the full resolvosome a probable DNA-RuvA(4)-RuvB(12)-RuvC(2) complex forms which resolves the HJ.

It is found in the cytoplasm. The catalysed reaction is ATP + H2O = ADP + phosphate + H(+). Functionally, the RuvA-RuvB-RuvC complex processes Holliday junction (HJ) DNA during genetic recombination and DNA repair, while the RuvA-RuvB complex plays an important role in the rescue of blocked DNA replication forks via replication fork reversal (RFR). RuvA specifically binds to HJ cruciform DNA, conferring on it an open structure. The RuvB hexamer acts as an ATP-dependent pump, pulling dsDNA into and through the RuvAB complex. RuvB forms 2 homohexamers on either side of HJ DNA bound by 1 or 2 RuvA tetramers; 4 subunits per hexamer contact DNA at a time. Coordinated motions by a converter formed by DNA-disengaged RuvB subunits stimulates ATP hydrolysis and nucleotide exchange. Immobilization of the converter enables RuvB to convert the ATP-contained energy into a lever motion, pulling 2 nucleotides of DNA out of the RuvA tetramer per ATP hydrolyzed, thus driving DNA branch migration. The RuvB motors rotate together with the DNA substrate, which together with the progressing nucleotide cycle form the mechanistic basis for DNA recombination by continuous HJ branch migration. Branch migration allows RuvC to scan DNA until it finds its consensus sequence, where it cleaves and resolves cruciform DNA. This chain is Holliday junction branch migration complex subunit RuvB, found in Campylobacter jejuni subsp. doylei (strain ATCC BAA-1458 / RM4099 / 269.97).